We begin with the raw amino-acid sequence, 118 residues long: Small ribosomal subunit protein uS13 (118 aa).

Positions 92–118 (RKGLPVRGQRTKTNARTRKGPRKPIRK) are disordered.

It belongs to the universal ribosomal protein uS13 family. In terms of assembly, part of the 30S ribosomal subunit. Forms a loose heterodimer with protein S19. Forms two bridges to the 50S subunit in the 70S ribosome.

Located at the top of the head of the 30S subunit, it contacts several helices of the 16S rRNA. In the 70S ribosome it contacts the 23S rRNA (bridge B1a) and protein L5 of the 50S subunit (bridge B1b), connecting the 2 subunits; these bridges are implicated in subunit movement. Contacts the tRNAs in the A and P-sites. This Pseudomonas putida (strain W619) protein is Small ribosomal subunit protein uS13.